The sequence spans 293 residues: Microtubule-associated protein RP/EB family member 1B (293 aa).

A Calponin-homology (CH) domain is found at 13–115; that stretch reads FVGRNEILSW…FLQWLKRFCD (103 aa). Disordered regions lie at residues 124–188 and 262–293; these read ENYN…SAEV and LGLE…ETQT. The segment covering 129-141 has biased composition (basic and acidic residues); sequence VERRSRGGREKSV. Positions 151 to 166 are enriched in polar residues; that stretch reads LQTNNMHHPPVATSNK. The EB1 C-terminal domain occupies 180–250; that stretch reads GGSNSSAEVQ…LYATDANESV (71 aa). Residues 266 to 285 show a composition bias toward acidic residues; the sequence is GYEEEGKEEEEEEEEEEEEA.

This sequence belongs to the MAPRE family. In terms of assembly, homodimer and heterodimer with EB1A. Highly expressed in guard cells of leaf stomata, pollen grains and pollen tubes. Expressed in young roots.

It localises to the cytoplasm. The protein resides in the cytoskeleton. It is found in the spindle pole. Its subcellular location is the phragmoplast. Functionally, binds to the plus end of microtubules and regulates the dynamics of the microtubule cytoskeleton. May be involved in anchoring microtubules to their nucleation sites and/or functioning as a reservoir for distribution to the growing end. In plants, microtubule minus ends are not necessarily severed from the nucleation site and transported to the plus end of a microtubule as part of the recycling process. May play a role in endomembrane organization during polarized growth of plant cells. The protein is Microtubule-associated protein RP/EB family member 1B (EB1B) of Arabidopsis thaliana (Mouse-ear cress).